The sequence spans 292 residues: Phosphoribulokinase 2 (292 aa).

12 to 20 (GSSGAGTST) provides a ligand contact to ATP.

The protein belongs to the phosphoribulokinase family.

It catalyses the reaction D-ribulose 5-phosphate + ATP = D-ribulose 1,5-bisphosphate + ADP + H(+). It participates in carbohydrate biosynthesis; Calvin cycle. The sequence is that of Phosphoribulokinase 2 (prkB) from Cereibacter sphaeroides (Rhodobacter sphaeroides).